The primary structure comprises 166 residues: Regulatory protein RecX (166 aa).

Belongs to the RecX family.

The protein localises to the cytoplasm. In terms of biological role, modulates RecA activity. The chain is Regulatory protein RecX from Shigella dysenteriae serotype 1 (strain Sd197).